Reading from the N-terminus, the 513-residue chain is ATP synthase subunit alpha (513 aa).

ATP is bound at residue 169–176 (GDRQTGKT).

It belongs to the ATPase alpha/beta chains family. As to quaternary structure, F-type ATPases have 2 components, CF(1) - the catalytic core - and CF(0) - the membrane proton channel. CF(1) has five subunits: alpha(3), beta(3), gamma(1), delta(1), epsilon(1). CF(0) has three main subunits: a(1), b(2) and c(9-12). The alpha and beta chains form an alternating ring which encloses part of the gamma chain. CF(1) is attached to CF(0) by a central stalk formed by the gamma and epsilon chains, while a peripheral stalk is formed by the delta and b chains.

It localises to the cell inner membrane. It carries out the reaction ATP + H2O + 4 H(+)(in) = ADP + phosphate + 5 H(+)(out). Produces ATP from ADP in the presence of a proton gradient across the membrane. The alpha chain is a regulatory subunit. The polypeptide is ATP synthase subunit alpha (Shewanella baltica (strain OS223)).